A 390-amino-acid chain; its full sequence is MPYDKKAVHFGGGNIGRGFVAEFLHNSGYEVVFVDVMDSIIEALQKQSSYTVTEIGDDGEREFTIDHYRALNSKHEMDKVVQEIASADVVTCAVGPNILKFVAEPVAKAIDARTLDYPIAVIACENAINATTTWRGFIEGKLSEDSKSNLDKKARFANSAIDRIVPVQDKDAGLNVKIEKFYEWCVEQKPFENGGKKPDVKGIHYVDDLEPYIERKLFTVNTSHATAAYYGHQAKKQYIHEVLQDKKLHDIVRDAVKETAHLIVSKHGVSVQEQNDYVDSIIKRISNPVLKDNVERVGRAPLRKLSRKERFVGPAAQLAERGEKVDALLGAIEQAYLFQNVEGDEESAELAKILKENSAEEVVTKVNGLDKSHPLFEKILPIVKKVQGGS.

7-18 provides a ligand contact to NAD(+); that stretch reads AVHFGGGNIGRG. Residue Lys-216 is part of the active site.

This sequence belongs to the mannitol dehydrogenase family. Monomer.

It carries out the reaction D-mannitol 1-phosphate + NAD(+) = beta-D-fructose 6-phosphate + NADH + H(+). Catalyzes the NAD(H)-dependent interconversion of D-fructose 6-phosphate and D-mannitol 1-phosphate in the mannitol metabolic pathway. Required for the process of sporulation on senescing leaf material. The protein is Mannitol-1-phosphate 5-dehydrogenase (mpd1) of Phaeosphaeria nodorum (strain SN15 / ATCC MYA-4574 / FGSC 10173) (Glume blotch fungus).